The chain runs to 52 residues: Eukaryotic translation initiation factor 5A (52 aa).

Hypusine is present on K42.

It belongs to the eIF-5A family. Lys-42 undergoes hypusination, a unique post-translational modification that consists in the addition of a butylamino group from spermidine to lysine side chain, leading to the formation of the unusual amino acid hypusine. eIF-5As are the only known proteins to undergo this modification, which is essential for their function.

Its subcellular location is the cytoplasm. Its function is as follows. Translation factor that promotes translation elongation and termination, particularly upon ribosome stalling at specific amino acid sequence contexts. Binds between the exit (E) and peptidyl (P) site of the ribosome and promotes rescue of stalled ribosome: specifically required for efficient translation of polyproline-containing peptides as well as other motifs that stall the ribosome. Acts as a ribosome quality control (RQC) cofactor by joining the RQC complex to facilitate peptidyl transfer during CAT tailing step. The polypeptide is Eukaryotic translation initiation factor 5A (Schistosoma mansoni (Blood fluke)).